Consider the following 212-residue polypeptide: Peptide methionine sulfoxide reductase MsrA (212 aa).

Residue Cys-52 is part of the active site.

Belongs to the MsrA Met sulfoxide reductase family.

It carries out the reaction L-methionyl-[protein] + [thioredoxin]-disulfide + H2O = L-methionyl-(S)-S-oxide-[protein] + [thioredoxin]-dithiol. The enzyme catalyses [thioredoxin]-disulfide + L-methionine + H2O = L-methionine (S)-S-oxide + [thioredoxin]-dithiol. Has an important function as a repair enzyme for proteins that have been inactivated by oxidation. Catalyzes the reversible oxidation-reduction of methionine sulfoxide in proteins to methionine. The protein is Peptide methionine sulfoxide reductase MsrA of Yersinia pseudotuberculosis serotype O:1b (strain IP 31758).